The following is a 225-amino-acid chain: Orotate phosphoribosyltransferase (225 aa).

Lys-29 is a binding site for 5-phospho-alpha-D-ribose 1-diphosphate. Residue 37-38 (FF) coordinates orotate. 5-phospho-alpha-D-ribose 1-diphosphate contacts are provided by residues 75–76 (YK), Arg-105, Lys-106, Lys-109, His-111, and 130–138 (DDVITAGTS). Orotate contacts are provided by Thr-134 and Arg-162.

Belongs to the purine/pyrimidine phosphoribosyltransferase family. PyrE subfamily. In terms of assembly, homodimer. It depends on Mg(2+) as a cofactor.

The enzyme catalyses orotidine 5'-phosphate + diphosphate = orotate + 5-phospho-alpha-D-ribose 1-diphosphate. It functions in the pathway pyrimidine metabolism; UMP biosynthesis via de novo pathway; UMP from orotate: step 1/2. Its function is as follows. Catalyzes the transfer of a ribosyl phosphate group from 5-phosphoribose 1-diphosphate to orotate, leading to the formation of orotidine monophosphate (OMP). The chain is Orotate phosphoribosyltransferase from Bordetella petrii (strain ATCC BAA-461 / DSM 12804 / CCUG 43448).